The chain runs to 100 residues: Large ribosomal subunit protein uL23 (100 aa).

It belongs to the universal ribosomal protein uL23 family. Part of the 50S ribosomal subunit. Contacts protein L29, and trigger factor when it is bound to the ribosome.

One of the early assembly proteins it binds 23S rRNA. One of the proteins that surrounds the polypeptide exit tunnel on the outside of the ribosome. Forms the main docking site for trigger factor binding to the ribosome. This chain is Large ribosomal subunit protein uL23, found in Prochlorococcus marinus (strain MIT 9312).